Reading from the N-terminus, the 757-residue chain is MKYGVKYEIDQSIPNDLPDFPFIDEKDYPSERWEITLKDQDTIIFSFNFLYIGKFLNEIKRYCKNRIITFETNIPKENNFYLLYHFIIWKNKNNWCEDSKVLIFKNSMIFIFCETRIKIDIDNNEIIIKSNPKTDTTLELKMSKFLENLKEKPLQVKNYYYFFTILSKVSNSVLINDDGFDIWIYSLEYPLFIIAKNGTGKTRFLKKVFTNSGILKCKQSIYLNEFMVLSFSNGVNNEEVKFFEEFLNVYKAHSMLSTLNNKGFLTKYIWNSINEVLKSNNLPFSLLPSDLKSDRLLFKMDDVTLYYHDLSSGEKTLFIVFALIVFYQDNYSGIADEEVLLLLDEIETTLHAQSLRVLFNAIHKQRNNLKIIMSTHNSTSLRIASEYGFHYYLLEKSLTISDGNSVKIKELKSHENAISYVSDGMLSVVDSSKLVFVEDDDDSKFYEIAYKKLFNYPHTTRLVFCNAGIKNNSQHDLNQVSLILKKMDGNDENVKSIQKLINTLKETNTIGGKTSVKEKVKLLSEKSVTEESFRLGNSQIIGLLDKDDGKNEGEFLITIDYYSYEMFLCSPLVLFYMIKNEFLKTSPDSHLSTITTTTPSSQEINTNLSQQDMVCFVIEKLIEKEVETKNRETNKTWKEYLDIFYEGIRSTTLFDVKLENQAIIKVPEIFINGFGKKGKGHNLFDTLVRIFAFGLNMQESTEKLKIKTLEAFEKMSTDNIPSCLRDTFLKVMNYSLKKITNNNNNNNNNNNNNKIKN.

This is an uncharacterized protein from Dictyostelium discoideum (Social amoeba).